We begin with the raw amino-acid sequence, 464 residues long: Formin-like protein 19 (464 aa).

The segment at 1 to 74 (MSLVDISGAY…PRPCSRPPKT (74 aa)) is disordered. The segment covering 14–70 (PLPPPPPPLMRRRAPLPPPPPPPLMRRRAPPPPPPPLMRRRAPPPPPPPPLPRPCSR) has biased composition (pro residues). The 395-residue stretch at 68-462 (CSRPPKTKCS…KAAKEAEMEK (395 aa)) folds into the FH2 domain.

It belongs to the formin-like family. Class-II subfamily.

The polypeptide is Formin-like protein 19 (FH19) (Arabidopsis thaliana (Mouse-ear cress)).